We begin with the raw amino-acid sequence, 293 residues long: 4-hydroxy-tetrahydrodipicolinate synthase (293 aa).

Residue T45 participates in pyruvate binding. Y133 serves as the catalytic Proton donor/acceptor. K161 (schiff-base intermediate with substrate) is an active-site residue. I203 contributes to the pyruvate binding site.

It belongs to the DapA family. In terms of assembly, homotetramer; dimer of dimers.

It localises to the cytoplasm. It catalyses the reaction L-aspartate 4-semialdehyde + pyruvate = (2S,4S)-4-hydroxy-2,3,4,5-tetrahydrodipicolinate + H2O + H(+). Its pathway is amino-acid biosynthesis; L-lysine biosynthesis via DAP pathway; (S)-tetrahydrodipicolinate from L-aspartate: step 3/4. Functionally, catalyzes the condensation of (S)-aspartate-beta-semialdehyde [(S)-ASA] and pyruvate to 4-hydroxy-tetrahydrodipicolinate (HTPA). In Exiguobacterium sibiricum (strain DSM 17290 / CCUG 55495 / CIP 109462 / JCM 13490 / 255-15), this protein is 4-hydroxy-tetrahydrodipicolinate synthase.